Here is an 813-residue protein sequence, read N- to C-terminus: DNA gyrase subunit A (813 aa).

Positions 38–504 (LPDVRDGLKP…EIEYLDVEDF (467 aa)) constitute a Topo IIA-type catalytic domain. Tyr-126 functions as the O-(5'-phospho-DNA)-tyrosine intermediate in the catalytic mechanism. The GyrA-box signature appears at 531-537 (QNRGGKG).

This sequence belongs to the type II topoisomerase GyrA/ParC subunit family. In terms of assembly, heterotetramer, composed of two GyrA and two GyrB chains. In the heterotetramer, GyrA contains the active site tyrosine that forms a transient covalent intermediate with DNA, while GyrB binds cofactors and catalyzes ATP hydrolysis.

The protein localises to the cytoplasm. The catalysed reaction is ATP-dependent breakage, passage and rejoining of double-stranded DNA.. In terms of biological role, a type II topoisomerase that negatively supercoils closed circular double-stranded (ds) DNA in an ATP-dependent manner to modulate DNA topology and maintain chromosomes in an underwound state. Negative supercoiling favors strand separation, and DNA replication, transcription, recombination and repair, all of which involve strand separation. Also able to catalyze the interconversion of other topological isomers of dsDNA rings, including catenanes and knotted rings. Type II topoisomerases break and join 2 DNA strands simultaneously in an ATP-dependent manner. In Treponema pallidum (strain Nichols), this protein is DNA gyrase subunit A.